A 127-amino-acid polypeptide reads, in one-letter code: Small ribosomal subunit protein eS8 (127 aa).

The disordered stretch occupies residues 1-33; the sequence is MAIWQGKSMKKPSGGRAKMNRGKRKYELGREPA.

The protein belongs to the eukaryotic ribosomal protein eS8 family. As to quaternary structure, part of the 30S ribosomal subunit.

The chain is Small ribosomal subunit protein eS8 (rps8e) from Methanothermobacter thermautotrophicus (strain ATCC 29096 / DSM 1053 / JCM 10044 / NBRC 100330 / Delta H) (Methanobacterium thermoautotrophicum).